Here is a 481-residue protein sequence, read N- to C-terminus: Glutamyl-tRNA(Gln) amidotransferase subunit A (481 aa).

Active-site charge relay system residues include K75 and S150. The active-site Acyl-ester intermediate is S174.

Belongs to the amidase family. GatA subfamily. Heterotrimer of A, B and C subunits.

The catalysed reaction is L-glutamyl-tRNA(Gln) + L-glutamine + ATP + H2O = L-glutaminyl-tRNA(Gln) + L-glutamate + ADP + phosphate + H(+). Allows the formation of correctly charged Gln-tRNA(Gln) through the transamidation of misacylated Glu-tRNA(Gln) in organisms which lack glutaminyl-tRNA synthetase. The reaction takes place in the presence of glutamine and ATP through an activated gamma-phospho-Glu-tRNA(Gln). This chain is Glutamyl-tRNA(Gln) amidotransferase subunit A, found in Macrococcus caseolyticus (strain JCSC5402) (Macrococcoides caseolyticum).